The primary structure comprises 273 residues: Putative phosphoenolpyruvate synthase regulatory protein (273 aa).

Gly153–Thr160 serves as a coordination point for ADP.

Belongs to the pyruvate, phosphate/water dikinase regulatory protein family. PSRP subfamily.

The enzyme catalyses [pyruvate, water dikinase] + ADP = [pyruvate, water dikinase]-phosphate + AMP + H(+). The catalysed reaction is [pyruvate, water dikinase]-phosphate + phosphate + H(+) = [pyruvate, water dikinase] + diphosphate. Functionally, bifunctional serine/threonine kinase and phosphorylase involved in the regulation of the phosphoenolpyruvate synthase (PEPS) by catalyzing its phosphorylation/dephosphorylation. This chain is Putative phosphoenolpyruvate synthase regulatory protein, found in Delftia acidovorans (strain DSM 14801 / SPH-1).